We begin with the raw amino-acid sequence, 428 residues long: Aerobic C4-dicarboxylate transport protein (428 aa).

A run of 9 helical transmembrane segments spans residues Leu5 to Tyr27, Met47 to Met64, Ala77 to Val99, Val141 to Ala163, Val184 to Phe206, Leu216 to Leu238, Val289 to Met311, Ile326 to Gly348, and Val353 to Ile375.

The protein belongs to the dicarboxylate/amino acid:cation symporter (DAACS) (TC 2.A.23) family.

The protein resides in the cell inner membrane. Responsible for the transport of dicarboxylates such as succinate, fumarate, and malate from the periplasm across the inner membrane. The polypeptide is Aerobic C4-dicarboxylate transport protein (dctA) (Salmonella typhimurium (strain LT2 / SGSC1412 / ATCC 700720)).